The sequence spans 184 residues: Thymidine kinase (184 aa).

ATP contacts are provided by residues 10–17 (GPMYSGKT), histidine 53, and 83–86 (DEVQ). The active-site Proton acceptor is glutamate 84. A substrate-binding site is contributed by histidine 115. Zn(2+)-binding residues include cysteine 140 and cysteine 143. Residues 161 to 164 (IDVG) and tyrosine 169 contribute to the substrate site. Zn(2+) contacts are provided by cysteine 173 and cysteine 176.

It belongs to the thymidine kinase family. Homotetramer.

Its subcellular location is the cytoplasm. The enzyme catalyses thymidine + ATP = dTMP + ADP + H(+). The polypeptide is Thymidine kinase (tdk) (Thermotoga maritima (strain ATCC 43589 / DSM 3109 / JCM 10099 / NBRC 100826 / MSB8)).